The sequence spans 243 residues: 1-(5-phosphoribosyl)-5-[(5-phosphoribosylamino)methylideneamino] imidazole-4-carboxamide isomerase (243 aa).

Aspartate 8 (proton acceptor) is an active-site residue. The active-site Proton donor is the aspartate 130.

It belongs to the HisA/HisF family.

The protein resides in the cytoplasm. The enzyme catalyses 1-(5-phospho-beta-D-ribosyl)-5-[(5-phospho-beta-D-ribosylamino)methylideneamino]imidazole-4-carboxamide = 5-[(5-phospho-1-deoxy-D-ribulos-1-ylimino)methylamino]-1-(5-phospho-beta-D-ribosyl)imidazole-4-carboxamide. It functions in the pathway amino-acid biosynthesis; L-histidine biosynthesis; L-histidine from 5-phospho-alpha-D-ribose 1-diphosphate: step 4/9. The protein is 1-(5-phosphoribosyl)-5-[(5-phosphoribosylamino)methylideneamino] imidazole-4-carboxamide isomerase of Acinetobacter baylyi (strain ATCC 33305 / BD413 / ADP1).